A 242-amino-acid polypeptide reads, in one-letter code: ATP-dependent dethiobiotin synthetase BioD (242 aa).

An ATP-binding site is contributed by 12 to 17 (EVGKTV). Thr16 lines the Mg(2+) pocket. The active site involves Lys37. Ser41 is a binding site for substrate. Residues Asp51 and 112–115 (EGAG) contribute to the ATP site. Mg(2+) is bound by residues Asp51 and Glu112.

The protein belongs to the dethiobiotin synthetase family. Homodimer. Mg(2+) serves as cofactor.

It is found in the cytoplasm. The enzyme catalyses (7R,8S)-7,8-diammoniononanoate + CO2 + ATP = (4R,5S)-dethiobiotin + ADP + phosphate + 3 H(+). It participates in cofactor biosynthesis; biotin biosynthesis; biotin from 7,8-diaminononanoate: step 1/2. Its function is as follows. Catalyzes a mechanistically unusual reaction, the ATP-dependent insertion of CO2 between the N7 and N8 nitrogen atoms of 7,8-diaminopelargonic acid (DAPA, also called 7,8-diammoniononanoate) to form a ureido ring. This chain is ATP-dependent dethiobiotin synthetase BioD, found in Bacillus cereus (strain AH820).